The following is a 135-amino-acid chain: UPF0299 membrane protein YE2790 (135 aa).

4 helical membrane-spanning segments follow: residues 4–24 (VTSLGWQYLRAFVIIYLCLWA), 30–50 (LLLPISIPGSILGMLILFALL), 63–83 (GCHLLIRYMALLFVPIGVGVM), and 93–113 (FGPIVVSCFVSTLVVMLVVGY).

It belongs to the UPF0299 family.

It localises to the cell inner membrane. The chain is UPF0299 membrane protein YE2790 from Yersinia enterocolitica serotype O:8 / biotype 1B (strain NCTC 13174 / 8081).